The primary structure comprises 525 residues: MPTPPPDALDASPQPVNRGNALLVLAVFVVASCGLAYELIAGALASYLLGDSILQFSSIIGAYLFAMGIGSWVSRYVADDALLARFVDLELLVGLFGGVSAAALFLLFALESAPFRLVLYALVTVIGVLVGMEIPLVMRMLHRRQAKFSDLVSRVLTFDYLGALAVSLLFPLVLAPRLGLVRTGFLFGLCNTAIAVWTLWHFRAELGLSARLRGAMAWRAGMVGAALLAGFAASDRLTHWSERALFGDEIIHAISSPYQRLVVTRWKDDLRLYINGNLQFSSRDEYRYHEALVLPALESVRGARRVLVLGGGDGLALRQILKYPQVEHVTLVDLDPRMTSLFSHAEALVALNQHAFSDPRVTVVNADAGQWLQTAADMFDVAIVDFPDPSNFSIGKLYSVPFYRLLSRHVADTGLVVIQATSPYFAPRSYWCVDATLKEAGYRTWPYHALVPSFGEWGFILAAPGRADFRPPTTYRVPTRFLDADTTHQMFSFAPDMPRPQVEPNRLNNQSLVRYFEEDWHGVLR.

6 consecutive transmembrane segments (helical) span residues 21 to 41 (ALLV…ELIA), 53 to 73 (ILQF…GSWV), 89 to 109 (LELL…LLFA), 117 to 137 (LVLY…IPLV), 155 to 175 (VLTF…LVLA), and 180 to 200 (LVRT…WTLW). Positions 220–464 (AGMVGAALLA…GEWGFILAAP (245 aa)) constitute a PABS domain. Positions 222–471 (MVGAALLAGF…AAPGRADFRP (250 aa)) are spermidine synthase. Residue Gln-259 coordinates S-methyl-5'-thioadenosine. His-289 and Asp-313 together coordinate spermidine. Residues Asp-333 and 367–368 (DA) contribute to the S-methyl-5'-thioadenosine site. Asp-385 serves as the catalytic Proton acceptor.

The protein belongs to the spermidine/spermine synthase family. In terms of assembly, homodimer or homotetramer.

It localises to the cell membrane. It catalyses the reaction S-adenosyl 3-(methylsulfanyl)propylamine + putrescine = S-methyl-5'-thioadenosine + spermidine + H(+). It functions in the pathway amine and polyamine biosynthesis; spermidine biosynthesis; spermidine from putrescine: step 1/1. Functionally, catalyzes the irreversible transfer of a propylamine group from the amino donor S-adenosylmethioninamine (decarboxy-AdoMet) to putrescine (1,4-diaminobutane) to yield spermidine. This is Polyamine aminopropyltransferase 1 from Ralstonia nicotianae (strain ATCC BAA-1114 / GMI1000) (Ralstonia solanacearum).